A 556-amino-acid polypeptide reads, in one-letter code: Peptide chain release factor 3 (556 aa).

The 270-residue stretch at 28–297 (QQRRNFAIIS…AFLDYALKPG (270 aa)) folds into the tr-type G domain. GTP is bound by residues 37-44 (SHPDAGKT), 105-109 (DTPGH), and 159-162 (NKMD).

Belongs to the TRAFAC class translation factor GTPase superfamily. Classic translation factor GTPase family. PrfC subfamily.

It is found in the cytoplasm. In terms of biological role, increases the formation of ribosomal termination complexes and stimulates activities of RF-1 and RF-2. It binds guanine nucleotides and has strong preference for UGA stop codons. It may interact directly with the ribosome. The stimulation of RF-1 and RF-2 is significantly reduced by GTP and GDP, but not by GMP. This Synechococcus elongatus (strain ATCC 33912 / PCC 7942 / FACHB-805) (Anacystis nidulans R2) protein is Peptide chain release factor 3.